A 158-amino-acid polypeptide reads, in one-letter code: G-protein-signaling modulator 3 (158 aa).

Residues 1-53 (MEAERPQEDGEQSLPQDDQGWPPVNSTARPWRSAPPSPPPPGTRHTALGPRSG) are disordered. Ser33 and Ser37 each carry phosphoserine. The segment covering 33–42 (SAPPSPPPPG) has biased composition (pro residues). Over residues 43–53 (TRHTALGPRSG) the composition is skewed to low complexity. Ser54 and Ser57 each carry phosphoserine. At Thr60 the chain carries Phosphothreonine. A GoLoco 1 domain is found at 60–82 (TELLLDLVAEAQSRRLEEQRAAF). A disordered region spans residues 78 to 97 (QRAAFHTPKVPPSLAPTPPR). The segment covering 86 to 96 (KVPPSLAPTPP) has biased composition (pro residues). 2 consecutive GoLoco domains span residues 102 to 124 (KEQLYSTILSHQCQRIEAQRSDP) and 130 to 153 (GQELLELLLRVQGGGRMEDQRSRP).

It localises to the cytoplasm. Interacts with subunit of G(i) alpha proteins and regulates the activation of G(i) alpha proteins. This is G-protein-signaling modulator 3 (Gpsm3) from Rattus norvegicus (Rat).